The following is a 426-amino-acid chain: Probable alpha-galactosidase B (426 aa).

Residues M1–A13 form the signal peptide. 2 cysteine pairs are disulfide-bonded: C24-C56 and C106-C136. The active-site Nucleophile is D134. 2 N-linked (GlcNAc...) asparagine glycosylation sites follow: N141 and N159. Substrate is bound at residue E204 to A208. An N-linked (GlcNAc...) asparagine glycan is attached at N215. The active-site Proton donor is the D226. A glycan (N-linked (GlcNAc...) asparagine) is linked at N265.

Belongs to the glycosyl hydrolase 27 family.

The protein localises to the secreted. The catalysed reaction is Hydrolysis of terminal, non-reducing alpha-D-galactose residues in alpha-D-galactosides, including galactose oligosaccharides, galactomannans and galactolipids.. Its function is as follows. Hydrolyzes a variety of simple alpha-D-galactoside as well as more complex molecules such as oligosaccharides and polysaccharides. This is Probable alpha-galactosidase B (aglB) from Aspergillus fumigatus (strain CBS 144.89 / FGSC A1163 / CEA10) (Neosartorya fumigata).